Here is a 203-residue protein sequence, read N- to C-terminus: Endo-type membrane-bound lytic murein transglycosylase A (203 aa).

An N-terminal signal peptide occupies residues 1-15; it reads MKLRWFAFLIVLLAG. Cys-16 is lipidated: N-palmitoyl cysteine. Residue Cys-16 is the site of S-diacylglycerol cysteine attachment.

It belongs to the transglycosylase Slt family.

It localises to the cell outer membrane. The catalysed reaction is Endolytic cleavage of the (1-&gt;4)-beta-glycosidic linkage between N-acetylmuramic acid (MurNAc) and N-acetylglucosamine (GlcNAc) residues in peptidoglycan with concomitant formation of a 1,6-anhydrobond in the MurNAc residue.. Its function is as follows. Murein-degrading enzyme. May play a role in recycling of muropeptides during cell elongation and/or cell division. Preferentially cleaves at a distance of more than two disaccharide units from the ends of the glycan chain. This is Endo-type membrane-bound lytic murein transglycosylase A from Shigella boydii serotype 4 (strain Sb227).